Consider the following 380-residue polypeptide: Cytochrome b (380 aa).

Transmembrane regions (helical) follow at residues 33–53 (FGSL…FLAM), 77–98 (WTIR…FLHI), 113–133 (WNIG…GYVL), and 178–198 (FFTF…LHLL). Heme b contacts are provided by His83 and His97. Residues His182 and His196 each contribute to the heme b site. Position 201 (His201) interacts with a ubiquinone. A run of 4 helical transmembrane segments spans residues 226–246 (IKDI…TLFS), 288–308 (LGGV…PILH), 320–340 (LSQL…WIGG), and 347–367 (FITI…FLMP).

The protein belongs to the cytochrome b family. In terms of assembly, the cytochrome bc1 complex contains 11 subunits: 3 respiratory subunits (MT-CYB, CYC1 and UQCRFS1), 2 core proteins (UQCRC1 and UQCRC2) and 6 low-molecular weight proteins (UQCRH/QCR6, UQCRB/QCR7, UQCRQ/QCR8, UQCR10/QCR9, UQCR11/QCR10 and a cleavage product of UQCRFS1). This cytochrome bc1 complex then forms a dimer. The cofactor is heme b.

Its subcellular location is the mitochondrion inner membrane. In terms of biological role, component of the ubiquinol-cytochrome c reductase complex (complex III or cytochrome b-c1 complex) that is part of the mitochondrial respiratory chain. The b-c1 complex mediates electron transfer from ubiquinol to cytochrome c. Contributes to the generation of a proton gradient across the mitochondrial membrane that is then used for ATP synthesis. The chain is Cytochrome b (MT-CYB) from Gorilla gorilla gorilla (Western lowland gorilla).